Consider the following 407-residue polypeptide: MALGNALYPLTATVFLCVVGFATSSNENSRFLINSRLEVNVKSLLGEICGTNSSLLSIGVKSLSNEYSDRTVENLCGNETTEVLLWIPVGNFGNLAELGLSSRYLGKGAGDEDFAEYCSYDVTTKSCTTDNGAVEGSILLLAEKFPERYELRDLVYKKWRNSTHLGAPILAYGTLKNREPAYKYVDQDISYLADTRIEYVLPATVTHGIPLSVYRGKTESYKLVAGETYYSRIFKTINAIRYMSPYSTINVTVIGSEGRDYREFRAKLVTVYTDEEGYGWSKSLSSIEAAMIETKLTETHVEYALPVNLYDTQPPVLSPLLPALNEGNSIVDKGQQPAKGIVAKPENIHIHISELDFGQAYPGFRNVAIGAAILFFSVLGVAIIDMIRRTIANRRAKRLHLGKYSRT.

A signal peptide spans M1–S24. Topologically, residues S25–N366 are extracellular. N-linked (GlcNAc...) asparagine glycosylation is found at N52, N78, N161, and N250. Residues V367–I387 form a helical membrane-spanning segment. The Cytoplasmic portion of the chain corresponds to R388 to T407.

In terms of assembly, (Microbial infection) Interacts with ENO/enolase from parasites P.berghei and P.falciparum. As to expression, expressed in the female midgut epithelium.

The protein resides in the cell membrane. Its function is as follows. (Microbial infection) Acts as a receptor for ENO/enolase from parasites P.berghei and P.falciparum. The interaction is involved in the invasion of the mosquito midgut by P.berghei ookinete, but is dispensable for P.falciparum ookinete invasion. The protein is Enolase-binding protein of Anopheles gambiae (African malaria mosquito).